Reading from the N-terminus, the 324-residue chain is tRNA-cytidine(32) 2-sulfurtransferase (324 aa).

Residues 1–26 (MQDLIDSPTAARTPAEEKIRHEGNKL) form a disordered region. Residues 14 to 26 (PAEEKIRHEGNKL) are compositionally biased toward basic and acidic residues. A PP-loop motif motif is present at residues 55–60 (SGGKDS). 3 residues coordinate [4Fe-4S] cluster: Cys-130, Cys-133, and Cys-221. The interval 278–310 (RPDANGDTAFDPIDPEDPREDAGDACASSPADG) is disordered.

This sequence belongs to the TtcA family. As to quaternary structure, homodimer. Mg(2+) is required as a cofactor. Requires [4Fe-4S] cluster as cofactor.

The protein resides in the cytoplasm. The catalysed reaction is cytidine(32) in tRNA + S-sulfanyl-L-cysteinyl-[cysteine desulfurase] + AH2 + ATP = 2-thiocytidine(32) in tRNA + L-cysteinyl-[cysteine desulfurase] + A + AMP + diphosphate + H(+). It participates in tRNA modification. Catalyzes the ATP-dependent 2-thiolation of cytidine in position 32 of tRNA, to form 2-thiocytidine (s(2)C32). The sulfur atoms are provided by the cysteine/cysteine desulfurase (IscS) system. The polypeptide is tRNA-cytidine(32) 2-sulfurtransferase (Bordetella petrii (strain ATCC BAA-461 / DSM 12804 / CCUG 43448)).